Reading from the N-terminus, the 173-residue chain is Large ribosomal subunit protein bL17 (173 aa).

The tract at residues 136–173 is disordered; the sequence is AEEEAPAVEAEATEATEAPVEEAAAVEAEAPADAEKAE. The segment covering 138 to 149 has biased composition (acidic residues); that stretch reads EEAPAVEAEATE. Low complexity predominate over residues 150 to 166; it reads ATEAPVEEAAAVEAEAP.

The protein belongs to the bacterial ribosomal protein bL17 family. In terms of assembly, part of the 50S ribosomal subunit. Contacts protein L32.

This Bifidobacterium longum subsp. infantis (strain ATCC 15697 / DSM 20088 / JCM 1222 / NCTC 11817 / S12) protein is Large ribosomal subunit protein bL17.